A 431-amino-acid chain; its full sequence is Cyclic 2,3-diphosphoglycerate synthetase (431 aa).

Belongs to the cyclic 2,3-diphosphoglycerate synthetase family.

The protein resides in the cytoplasm. It carries out the reaction (2R)-2,3-bisphosphoglycerate + ATP + H(+) = cyclic (2R)-2,3-bisphosphoglycerate + ADP + phosphate. Functionally, catalyzes the formation of cyclic 2,3-diphosphoglycerate (cDPG) by formation of an intramolecular phosphoanhydride bond at the expense of ATP. This chain is Cyclic 2,3-diphosphoglycerate synthetase, found in Pyrococcus furiosus (strain ATCC 43587 / DSM 3638 / JCM 8422 / Vc1).